The primary structure comprises 293 residues: MFTRLAPRLQPQLLSTKRVLTTRYPTLVRTPIFHQTPIQIIKRNYVIVHKERKKEPVIRYLFYMLVASWVAIYFVANRVDKKKPPKQSFTEREFQSYEEETGLKRRNKLISHHMNSKYKFYVIPYVHDEEELNRVANLLQHKDENATVKIIDPAQLIEEQKKDEGMKYHYLLEDLDEQGKPYPPGLITAVIKQEIYKILNTREGTFDTNFLIKNYPQTTNEAIKFENDISDIQKCLILHYDMLNELPKNKTDEEQRAIKNVDGYFSSVGKSKTLVEKFDPMDKEFEDIILEDI.

Residues 1–27 constitute a mitochondrion transit peptide; sequence MFTRLAPRLQPQLLSTKRVLTTRYPTL. Residues 57–76 traverse the membrane as a helical segment; the sequence is VIRYLFYMLVASWVAIYFVA.

The protein belongs to the AIM36 family.

The protein localises to the mitochondrion membrane. The chain is Altered inheritance of mitochondria protein 36, mitochondrial (AIM36) from Candida dubliniensis (strain CD36 / ATCC MYA-646 / CBS 7987 / NCPF 3949 / NRRL Y-17841) (Yeast).